The chain runs to 141 residues: Hemoglobin subunit alpha (141 aa).

Residues 1 to 141 (VLSSADKNNV…VSTVLTSKYR (141 aa)) enclose the Globin domain. Position 3 is a phosphoserine (Ser-3). An N6-succinyllysine mark is found at Lys-7 and Lys-11. The residue at position 16 (Lys-16) is an N6-acetyllysine; alternate. Lys-16 is subject to N6-succinyllysine; alternate. Residue Tyr-24 is modified to Phosphotyrosine. Ser-35 is subject to Phosphoserine. At Lys-40 the chain carries N6-succinyllysine. Ser-49 is modified (phosphoserine). An O2-binding site is contributed by His-58. Residue His-87 coordinates heme b. At Ser-102 the chain carries Phosphoserine. Thr-108 is modified (phosphothreonine). A Phosphoserine modification is found at Ser-124. Residues Thr-134 and Thr-137 each carry the phosphothreonine modification. Ser-138 is modified (phosphoserine).

The protein belongs to the globin family. As to quaternary structure, heterotetramer of two alpha chains and two beta chains. As to expression, red blood cells.

Its function is as follows. Involved in oxygen transport from the lung to the various peripheral tissues. In terms of biological role, hemopressin acts as an antagonist peptide of the cannabinoid receptor CNR1. Hemopressin-binding efficiently blocks cannabinoid receptor CNR1 and subsequent signaling. The protein is Hemoglobin subunit alpha (HBA) of Panthera pardus saxicolor (Northern Persian leopard).